Here is a 162-residue protein sequence, read N- to C-terminus: Globin CTT-VIIB-7 (162 aa).

Residues 1-16 (MKFFAVLALCVVGAIA) form the signal peptide. In terms of domain architecture, Globin spans 18-162 (PLSADEANLV…TYAVALKSLE (145 aa)). Positions 76 and 111 each coordinate heme b.

It belongs to the globin family. In terms of assembly, homodimer.

The protein is Globin CTT-VIIB-7 (CTT-7B7) of Chironomus thummi piger (Midge).